The following is an 840-amino-acid chain: Lon protease homolog 2, peroxisomal (840 aa).

In terms of domain architecture, Lon N-terminal spans 13–222 (LPLLCTHDGV…KALPLLTRQI (210 aa)). Residue 375-382 (GPPGVGKT) participates in ATP binding. The disordered stretch occupies residues 583-606 (QKVSRSEAPTEQHAEQNTDSKVED). Positions 584–606 (KVSRSEAPTEQHAEQNTDSKVED) are enriched in basic and acidic residues. The Lon proteolytic domain occupies 641 to 825 (LTLPGVAIGL…DEVLNAAFDG (185 aa)). Catalysis depends on residues serine 731 and lysine 774. Positions 838-840 (SKL) match the Microbody targeting signal motif.

This sequence belongs to the peptidase S16 family.

It localises to the peroxisome matrix. The enzyme catalyses Hydrolysis of proteins in presence of ATP.. ATP-dependent serine protease that mediates the selective degradation of misfolded and unassembled polypeptides in the peroxisomal matrix. Necessary for type 2 peroxisome targeting signal (PTS2)-containing protein processing and facilitates peroxisome matrix protein import. The sequence is that of Lon protease homolog 2, peroxisomal (lonp2) from Danio rerio (Zebrafish).